The chain runs to 862 residues: Leucine--tRNA ligase (862 aa).

A 'HIGH' region motif is present at residues 44 to 54 (PYPSGRIHMGH). The 'KMSKS' region signature appears at 622-626 (KMSKS). ATP is bound at residue K625.

This sequence belongs to the class-I aminoacyl-tRNA synthetase family.

It is found in the cytoplasm. The enzyme catalyses tRNA(Leu) + L-leucine + ATP = L-leucyl-tRNA(Leu) + AMP + diphosphate. The polypeptide is Leucine--tRNA ligase (Rhodospirillum rubrum (strain ATCC 11170 / ATH 1.1.1 / DSM 467 / LMG 4362 / NCIMB 8255 / S1)).